The following is a 311-amino-acid chain: CD-NTase-associated protein 6 (311 aa).

Residues 84–89 (GSGKTE) and 215–216 (RR) contribute to the ATP site.

Belongs to the AAA ATPase family. In terms of assembly, homohexamer. Forms a 1:1:6 CdnC:Cap7:Cap6 complex.

Regulates complex assembly in a CBASS antivirus system. CBASS (cyclic oligonucleotide-based antiphage signaling system) provides immunity against bacteriophage. The CD-NTase protein synthesizes cyclic nucleotides in response to infection; these serve as specific second messenger signals. The signals activate a diverse range of effectors, leading to bacterial cell death and thus abortive phage infection. A type III-C(AAA) CBASS system. Functionally, binds and disassembles an active CdnC:Cap7 (Cap7 is also called HORMA) complex, inhibiting the complex's ability to synthesize cyclic nucleotide second messengers. An AAA+-ATPase remodeler, in the absence of foreign threat Cap6 (also called Trip13) probably maintains the Cap7 protein in its open, inactive state. Once activated (presumably by a bacteriophage protein) Cap7 binds to and activates its cognate CD-NTase (CdnC in this bacteria) to synthesize cAAA, a cyclic nucleotide second messenger. cAAA activates the NucC endonuclease which degrades all DNA in the infected cell, causing cell death and abortive phage infection. Its function is as follows. Protects E.coli strain JP313 against bacteriophage lambda cI- infection. When the cdnC-cap7-cap6-nucC operon is transformed into a susceptible E.coli strain it confers bacteriophage lambda cI- immunity. Mutations in the sensor (Cap7 also called HORMA) or effector proteins (CdnC, NucC) but not the disassembly protein (Cap6 also called Trip13) no longer confer immunity. The presence of the intact operon leads to culture collapse and cell death, which occurs before the phage has finished its replication cycle, thus protecting non-infected bacteria by aborting the phage infection and preventing its propagation. This is CD-NTase-associated protein 6 from Escherichia coli (strain MS 115-1).